The sequence spans 253 residues: Indole-3-glycerol phosphate synthase (253 aa).

Belongs to the TrpC family.

It carries out the reaction 1-(2-carboxyphenylamino)-1-deoxy-D-ribulose 5-phosphate + H(+) = (1S,2R)-1-C-(indol-3-yl)glycerol 3-phosphate + CO2 + H2O. The protein operates within amino-acid biosynthesis; L-tryptophan biosynthesis; L-tryptophan from chorismate: step 4/5. The protein is Indole-3-glycerol phosphate synthase of Bacillus mycoides (strain KBAB4) (Bacillus weihenstephanensis).